The following is a 445-amino-acid chain: GTPase Obg (445 aa).

Residues 7-164 (PEFVDCVTVE…RKLRLEVKSI (158 aa)) enclose the Obg domain. The 178-residue stretch at 165–342 (ADVALVGFPS…FTLRLGEICQ (178 aa)) folds into the OBG-type G domain. GTP is bound by residues 171–178 (GFPSVGKS), 196–200 (FTTLH), 217–220 (DVPG), 291–294 (NKID), and 323–325 (SAV). Ser-178 and Thr-198 together coordinate Mg(2+). The OCT domain occupies 357–434 (IPAKNTPEFS…IGGVIFTWDP (78 aa)).

This sequence belongs to the TRAFAC class OBG-HflX-like GTPase superfamily. OBG GTPase family. As to quaternary structure, monomer. Mg(2+) serves as cofactor.

Its subcellular location is the cytoplasm. Functionally, an essential GTPase which binds GTP, GDP and possibly (p)ppGpp with moderate affinity, with high nucleotide exchange rates and a fairly low GTP hydrolysis rate. Plays a role in control of the cell cycle, stress response, ribosome biogenesis and in those bacteria that undergo differentiation, in morphogenesis control. The sequence is that of GTPase Obg from Tropheryma whipplei (strain Twist) (Whipple's bacillus).